A 471-amino-acid chain; its full sequence is POU domain protein 2 (471 aa).

Residues 1–18 (CGKSYEEEEEEEDDELEA) are compositionally biased toward acidic residues. 2 disordered regions span residues 1–32 (CGKS…SARQ) and 149–238 (DQQL…PKPL). The segment covering 165–180 (STPLSKSPLRSPSLSP) has biased composition (low complexity). The segment covering 186–196 (EPQQAQRTPPN) has biased composition (polar residues). Positions 197-230 (SLAAAGLGLSSAVLTPNTPSMQQQQQQTMTSTTN) are enriched in low complexity. Residues 257 to 331 (EETTDLEELE…LLQKWLEDAD (75 aa)) form the POU-specific domain. A DNA-binding region (homeobox) is located at residues 362–421 (RRKKRTSIETTIRGALEQAFVLNCKPTSEEINQLSERLHMDKEVVRVWFCNRRQKEKRIN).

This sequence belongs to the POU transcription factor family. Class-2 subfamily.

It is found in the nucleus. In terms of biological role, DNA-binding regulatory protein implicated in early development. Involved in neuronal cell fate decision. May act as an octamer-dependent activator of transcription. In Drosophila virilis (Fruit fly), this protein is POU domain protein 2 (pdm2).